The chain runs to 493 residues: UDP-N-acetylmuramate--L-alanine ligase (493 aa).

Residue 112–118 coordinates ATP; it reads GTHGKTT.

It belongs to the MurCDEF family.

The protein resides in the cytoplasm. The catalysed reaction is UDP-N-acetyl-alpha-D-muramate + L-alanine + ATP = UDP-N-acetyl-alpha-D-muramoyl-L-alanine + ADP + phosphate + H(+). It functions in the pathway cell wall biogenesis; peptidoglycan biosynthesis. Its function is as follows. Cell wall formation. The chain is UDP-N-acetylmuramate--L-alanine ligase from Nitrosospira multiformis (strain ATCC 25196 / NCIMB 11849 / C 71).